We begin with the raw amino-acid sequence, 265 residues long: Hydroxyethylthiazole kinase (265 aa).

Met-50 serves as a coordination point for substrate. ATP is bound by residues Arg-125 and Thr-171. A substrate-binding site is contributed by Gly-198.

This sequence belongs to the Thz kinase family. The cofactor is Mg(2+).

The enzyme catalyses 5-(2-hydroxyethyl)-4-methylthiazole + ATP = 4-methyl-5-(2-phosphooxyethyl)-thiazole + ADP + H(+). The protein operates within cofactor biosynthesis; thiamine diphosphate biosynthesis; 4-methyl-5-(2-phosphoethyl)-thiazole from 5-(2-hydroxyethyl)-4-methylthiazole: step 1/1. Its function is as follows. Catalyzes the phosphorylation of the hydroxyl group of 4-methyl-5-beta-hydroxyethylthiazole (THZ). The polypeptide is Hydroxyethylthiazole kinase (Cronobacter sakazakii (strain ATCC BAA-894) (Enterobacter sakazakii)).